The sequence spans 312 residues: Tyrosine recombinase XerC (312 aa).

One can recognise a Core-binding (CB) domain in the interval 10–101 (PDLQAARESW…GIRSLLRFLE (92 aa)). The 185-residue stretch at 122–306 (SLPKPLTASD…DTARLLEIYE (185 aa)) folds into the Tyr recombinase domain. Catalysis depends on residues Arg-165, Lys-190, His-258, Arg-261, and His-284. Residue Tyr-293 is the O-(3'-phospho-DNA)-tyrosine intermediate of the active site.

Belongs to the 'phage' integrase family. XerC subfamily. As to quaternary structure, forms a cyclic heterotetrameric complex composed of two molecules of XerC and two molecules of XerD.

The protein resides in the cytoplasm. In terms of biological role, site-specific tyrosine recombinase, which acts by catalyzing the cutting and rejoining of the recombining DNA molecules. The XerC-XerD complex is essential to convert dimers of the bacterial chromosome into monomers to permit their segregation at cell division. It also contributes to the segregational stability of plasmids. This chain is Tyrosine recombinase XerC, found in Mesorhizobium japonicum (strain LMG 29417 / CECT 9101 / MAFF 303099) (Mesorhizobium loti (strain MAFF 303099)).